The sequence spans 224 residues: Mammalian ependymin-related protein 1 (224 aa).

Positions 1–37 (MPARAPRRLVQGPRGTWLLGSLWVWVLCGLGMAGSLG) are cleaved as a signal peptide. Cystine bridges form between C42–C172, C88–C222, and C113–C210. 2 N-linked (GlcNAc...) asparagine glycosylation sites follow: N130 and N182.

It belongs to the ependymin family. Homodimer. N-glycosylated; the glycan contains mannose-6-phosphate moieties. As to expression, detected in brain, small intestine and in soleus, extensor digitorum longus and white gastrocnemius (at protein level). Detected in brain and skeletal muscle, and at lower leavels in heart.

It is found in the lysosome lumen. The protein localises to the secreted. Binds anionic lipids and gangliosides at acidic pH. In Mus musculus (Mouse), this protein is Mammalian ependymin-related protein 1 (Epdr1).